The following is a 261-amino-acid chain: Chanoclavine-I dehydrogenase easD (261 aa).

Residues Ile-18, Lys-48, Asp-66, Arg-132, Tyr-166, Lys-170, and Thr-201 each coordinate NADP(+). Tyr-166 (proton donor) is an active-site residue. Residue Lys-170 is the Lowers pKa of active site Tyr of the active site.

The protein belongs to the short-chain dehydrogenases/reductases (SDR) family.

The catalysed reaction is chanoclavine-I + NAD(+) = chanoclavine-I aldehyde + NADH + H(+). It participates in alkaloid biosynthesis; ergot alkaloid biosynthesis. Chanoclavine-I dehydrogenase; part of the gene cluster that mediates the biosynthesis of fumiclavanine C, a fungal ergot alkaloid. DmaW catalyzes the first step of ergot alkaloid biosynthesis by condensing dimethylallyl diphosphate (DMAP) and tryptophan to form 4-dimethylallyl-L-tryptophan. The second step is catalyzed by the methyltransferase easF that methylates 4-dimethylallyl-L-tryptophan in the presence of S-adenosyl-L-methionine, resulting in the formation of 4-dimethylallyl-L-abrine. The catalase easC and the FAD-dependent oxidoreductase easE then transform 4-dimethylallyl-L-abrine to chanoclavine-I which is further oxidized by EasD in the presence of NAD(+), resulting in the formation of chanoclavine-I aldehyde. EasA reduces chanoclavine-I aldehyde to dihydrochanoclavine-I aldehyde that spontaneously dehydrates to form 6,8-dimethyl-6,7-didehydroergoline. EasG then catalyzes the reduction of 6,8-dimethyl-6,7-didehydroergoline to form festuclavine. Hydrolysis of festuclavine by easM then leads to the formation of fumigaclavine B which is in turn acetylated by easN to fumigaclavine A. Finally, easL catalyzes the conversion of fumigaclavine A into fumigaclavine C by attaching a dimethylallyl moiety to C-2 of the indole nucleus. The polypeptide is Chanoclavine-I dehydrogenase easD (Aspergillus fumigatus (strain ATCC MYA-4609 / CBS 101355 / FGSC A1100 / Af293) (Neosartorya fumigata)).